Here is a 251-residue protein sequence, read N- to C-terminus: Flagellar basal-body rod protein FlgF (251 aa).

This sequence belongs to the flagella basal body rod proteins family. As to quaternary structure, the basal body constitutes a major portion of the flagellar organelle and consists of five rings (E,L,P,S, and M) mounted on a central rod. The rod consists of about 26 subunits of FlgG in the distal portion, and FlgB, FlgC and FlgF are thought to build up the proximal portion of the rod with about 6 subunits each.

Its subcellular location is the bacterial flagellum basal body. This chain is Flagellar basal-body rod protein FlgF (flgF), found in Salmonella typhimurium (strain LT2 / SGSC1412 / ATCC 700720).